Reading from the N-terminus, the 384-residue chain is Dual specificity protein phosphatase 9 (384 aa).

Ser16 carries the post-translational modification Phosphoserine. The 122-residue stretch at 18-139 (PRPRLLLLDC…FQAECPHLCE (122 aa)) folds into the Rhodanese domain. In terms of domain architecture, Tyrosine-protein phosphatase spans 203–346 (FPVQILPNLY…LLDFERSLRL (144 aa)). Phosphoserine is present on Ser262. Cys290 acts as the Phosphocysteine intermediate in catalysis. Residues 348 to 384 (ERHSQEQGSGGQASAASNPPSFFTTPTSDGAFELAPT) form a disordered region. Residue Ser351 is modified to Phosphoserine. Polar residues predominate over residues 359–375 (QASAASNPPSFFTTPTS).

The protein belongs to the protein-tyrosine phosphatase family. Non-receptor class dual specificity subfamily.

Its subcellular location is the cytoplasm. It catalyses the reaction O-phospho-L-tyrosyl-[protein] + H2O = L-tyrosyl-[protein] + phosphate. The catalysed reaction is O-phospho-L-seryl-[protein] + H2O = L-seryl-[protein] + phosphate. The enzyme catalyses O-phospho-L-threonyl-[protein] + H2O = L-threonyl-[protein] + phosphate. Functionally, inactivates MAP kinases. Has a specificity for the ERK family. The sequence is that of Dual specificity protein phosphatase 9 (DUSP9) from Homo sapiens (Human).